The following is a 2145-amino-acid chain: Adenylate cyclase (2145 aa).

4 disordered regions span residues 1–115 (MPRN…RMSD), 127–236 (DPAG…SGAR), 266–307 (GKEH…PVPK), and 329–547 (VRDI…GPTD). 3 stretches are compositionally biased toward low complexity: residues 7 to 23 (SSRF…SARS), 35 to 68 (PSAS…APSR), and 89 to 107 (SPTS…SSNS). Composition is skewed to polar residues over residues 134 to 148 (SRTQ…SLSQ) and 159 to 205 (PASS…TESP). A compositionally biased stretch (low complexity) spans 217–234 (SIASITTTASSQGSRASG). Positions 269–281 (HRSHSYSHARPHR) are enriched in basic residues. The span at 343-357 (NDSSQQNNPPKTSGS) shows a compositional bias: polar residues. Residues 377–403 (KSNEDPRSLRPTVSREDSTISVPKDRN) show a composition bias toward basic and acidic residues. Positions 404-441 (GSSTMYGTRSRAQSPAPSTTGSYWGHKSGSTDGQTSPG) are enriched in polar residues. 2 stretches are compositionally biased toward basic and acidic residues: residues 454–466 (RLKE…DLKK) and 495–511 (ADGK…RPDL). The 91-residue stretch at 637-727 (HNYCIRVFRA…IEDIGREDNS (91 aa)) folds into the Ras-associating domain. LRR repeat units lie at residues 779 to 800 (EIIS…FISV), 803 to 824 (NLRD…FGYA), 826 to 847 (RLTM…ALHN), 850 to 871 (GLLK…FEAF), 873 to 894 (VLRT…LAKL), 896 to 917 (NLVD…VGQM), 919 to 941 (SLER…FKNL), 943 to 964 (SLRE…SQLP), 965 to 986 (KLEI…FERV), 987 to 1006 (RSIK…APVP), 1007 to 1028 (TLKA…FHNM), 1030 to 1051 (NLER…IGNL), 1053 to 1074 (RLEY…IGCL), 1076 to 1097 (ELKR…LWWA), and 1099 to 1120 (KLDY…ASRA). The disordered stretch occupies residues 1114–1226 (PKPASRAPHP…SSRKDSSHTQ (113 aa)). Composition is skewed to low complexity over residues 1160 to 1179 (RPSQ…VPGG) and 1201 to 1217 (SRST…PTAS). LRR repeat units lie at residues 1235-1255 (SLRY…DQLC), 1259-1280 (NLRV…SIKS), 1283-1304 (QLVE…DLEE), 1307-1328 (MLQT…ISRA), 1330-1352 (KLTV…PYDW), and 1359-1380 (NLRY…SVPT). Positions 1432–1709 (PYGMADTLGS…NKMTVQMLGV (278 aa)) constitute a PPM-type phosphatase domain. Residues 1718-1760 (RSRQHKGQSMPVYASLQDDGGSSTGMRRARKARDGPLDSTLGR) are disordered. The 138-residue stretch at 1773-1910 (AIVFTDIKNS…PMVNKASRIS (138 aa)) folds into the Guanylate cyclase domain. 2 residues coordinate Mg(2+): D1778 and D1821.

Belongs to the adenylyl cyclase class-3 family. Requires Mg(2+) as cofactor.

It carries out the reaction ATP = 3',5'-cyclic AMP + diphosphate. Its function is as follows. Plays essential roles in regulation of cellular metabolism by catalyzing the synthesis of a second messenger, cAMP. The chain is Adenylate cyclase from Podospora anserina (Pleurage anserina).